Consider the following 89-residue polypeptide: Small ribosomal subunit protein uS15 (89 aa).

It belongs to the universal ribosomal protein uS15 family. In terms of assembly, part of the 30S ribosomal subunit. Forms a bridge to the 50S subunit in the 70S ribosome, contacting the 23S rRNA.

One of the primary rRNA binding proteins, it binds directly to 16S rRNA where it helps nucleate assembly of the platform of the 30S subunit by binding and bridging several RNA helices of the 16S rRNA. In terms of biological role, forms an intersubunit bridge (bridge B4) with the 23S rRNA of the 50S subunit in the ribosome. The polypeptide is Small ribosomal subunit protein uS15 (Escherichia coli O157:H7).